We begin with the raw amino-acid sequence, 259 residues long: Ribosomal RNA small subunit methyltransferase J (259 aa).

Residues 107–108 (RD), 123–124 (ER), 159–160 (SS), and Asp177 each bind S-adenosyl-L-methionine.

It belongs to the methyltransferase superfamily. RsmJ family.

It localises to the cytoplasm. The enzyme catalyses guanosine(1516) in 16S rRNA + S-adenosyl-L-methionine = N(2)-methylguanosine(1516) in 16S rRNA + S-adenosyl-L-homocysteine + H(+). Specifically methylates the guanosine in position 1516 of 16S rRNA. The sequence is that of Ribosomal RNA small subunit methyltransferase J from Shewanella loihica (strain ATCC BAA-1088 / PV-4).